The primary structure comprises 86 residues: Omega-theraphotoxin-Hhn1a 2 (86 aa).

An N-terminal signal peptide occupies residues 1 to 21 (MKSIVFVALLGLALLAVVCSA). The propeptide occupies 22–50 (SEDAHKELLKEVVRAMVVDKTDAVQAEER). Disulfide bonds link cysteine 52–cysteine 66, cysteine 59–cysteine 71, and cysteine 65–cysteine 78.

This sequence belongs to the neurotoxin 10 (Hwtx-1) family. 17 (Hntx-9) subfamily. In terms of tissue distribution, expressed by the venom gland.

It localises to the secreted. In terms of biological role, ion channel inhibitor. The chain is Omega-theraphotoxin-Hhn1a 2 from Cyriopagopus hainanus (Chinese bird spider).